The following is a 224-amino-acid chain: Giant hemoglobin linker AV-1 chain (224 aa).

The LDL-receptor class A domain maps to 62 to 103 (HWCPSKYHRCGNSPQCMSNMAFCDGVNDCKNHFDEDENRCVV). 3 cysteine pairs are disulfide-bonded: cysteine 64–cysteine 77, cysteine 71–cysteine 90, and cysteine 84–cysteine 101. An N-linked (GlcNAc...) asparagine glycan is attached at asparagine 108.

Giant hemoglobin is composed of four heme-containing chains (AI to AIV), and two linker chains (AV and AVI).

Acts as a linker for the assembly of heme-containing chains in the construction of giant hemoglobin. This is Giant hemoglobin linker AV-1 chain from Lamellibrachia sp. (Deep-sea giant tube worm).